We begin with the raw amino-acid sequence, 105 residues long: UPF0235 protein RT0827 (105 aa).

This sequence belongs to the UPF0235 family.

In Rickettsia typhi (strain ATCC VR-144 / Wilmington), this protein is UPF0235 protein RT0827.